Consider the following 316-residue polypeptide: Pantothenate kinase (316 aa).

95–102 provides a ligand contact to ATP; it reads GSVAVGKS.

Belongs to the prokaryotic pantothenate kinase family.

Its subcellular location is the cytoplasm. The catalysed reaction is (R)-pantothenate + ATP = (R)-4'-phosphopantothenate + ADP + H(+). It participates in cofactor biosynthesis; coenzyme A biosynthesis; CoA from (R)-pantothenate: step 1/5. The protein is Pantothenate kinase of Shewanella halifaxensis (strain HAW-EB4).